Reading from the N-terminus, the 73-residue chain is uncharacterized protein (73 aa).

Helical transmembrane passes span 7 to 27 and 47 to 67; these read LFSS…IPNL and YFGY…IIIL.

It is found in the cell membrane. This is an uncharacterized protein from Methanocaldococcus jannaschii (strain ATCC 43067 / DSM 2661 / JAL-1 / JCM 10045 / NBRC 100440) (Methanococcus jannaschii).